We begin with the raw amino-acid sequence, 506 residues long: AMP phosphorylase (506 aa).

AMP contacts are provided by residues Gly167, 193-198, and Thr202; that span reads SRAITG. Asp255 acts as the Proton donor in catalysis. Positions 263 and 287 each coordinate AMP.

Belongs to the thymidine/pyrimidine-nucleoside phosphorylase family. Type 2 subfamily.

It carries out the reaction AMP + phosphate = alpha-D-ribose 1,5-bisphosphate + adenine. The catalysed reaction is CMP + phosphate = cytosine + alpha-D-ribose 1,5-bisphosphate. The enzyme catalyses UMP + phosphate = alpha-D-ribose 1,5-bisphosphate + uracil. Catalyzes the conversion of AMP and phosphate to adenine and ribose 1,5-bisphosphate (R15P). Exhibits phosphorylase activity toward CMP and UMP in addition to AMP. Functions in an archaeal AMP degradation pathway, together with R15P isomerase and RubisCO. In Methanosarcina acetivorans (strain ATCC 35395 / DSM 2834 / JCM 12185 / C2A), this protein is AMP phosphorylase.